A 555-amino-acid chain; its full sequence is Urocanate hydratase (555 aa).

Residues Gly-51–Gly-52, Gln-129, Gly-175–Gly-177, Glu-195, Arg-200, Asn-241–Ala-242, Gln-262–His-266, Tyr-272–Leu-273, and Tyr-321 each bind NAD(+). Residue Cys-409 is part of the active site. Residue Gly-491 coordinates NAD(+).

This sequence belongs to the urocanase family. Requires NAD(+) as cofactor.

Its subcellular location is the cytoplasm. It carries out the reaction 4-imidazolone-5-propanoate = trans-urocanate + H2O. It participates in amino-acid degradation; L-histidine degradation into L-glutamate; N-formimidoyl-L-glutamate from L-histidine: step 2/3. In terms of biological role, catalyzes the conversion of urocanate to 4-imidazolone-5-propionate. The protein is Urocanate hydratase of Rhizorhabdus wittichii (strain DSM 6014 / CCUG 31198 / JCM 15750 / NBRC 105917 / EY 4224 / RW1) (Sphingomonas wittichii).